The primary structure comprises 490 residues: MHHCKRYRSPEPDPYLSYRWKRRRSYSREHEGRLRYPSRREPPPRRSRSRSHDRLPYQRRYRERRDSDTYRCEERSPSFGEDYYGPSRSRHRRRSRERGPYRTRKHAHHCHKRRTRSCSSASSRSQQSSKRSSRSVEDDKEGHLVCRIGDWLQERYEIVGNLGEGTFGKVVECLDHARGKSQVALKIIRNVGKYREAARLEINVLKKIKEKDKENKFLCVLMSDWFNFHGHMCIAFELLGKNTFEFLKENNFQPYPLPHVRHMAYQLCHALRFLHENQLTHTDLKPENILFVNSEFETLYNEHKSCEEKSVKNTSIRVADFGSATFDHEHHTTIVATRHYRPPEVILELGWAQPCDVWSIGCILFEYYRGFTLFQTHENREHLVMMEKILGPIPSHMIHRTRKQKYFYKGGLVWDENSSDGRYVKENCKPLKSYMLQDSLEHVQLFDLMRRMLEFDPAQRITLAEALLHPFFAGLTPEERSFHTSRNPSR.

The interval 1 to 138 is disordered; it reads MHHCKRYRSP…SKRSSRSVED (138 aa). The residue at position 7 (Tyr-7) is a Phosphotyrosine. Ser-9, Ser-49, Ser-51, Ser-67, Ser-76, and Ser-78 each carry phosphoserine. Composition is skewed to basic and acidic residues over residues 26–56 and 63–76; these read YSREHEGRLRYPSRREPPPRRSRSRSHDRLP and ERRDSDTYRCEERS. Over residues 88–116 the composition is skewed to basic residues; sequence RSRHRRRSRERGPYRTRKHAHHCHKRRTR. Residues 117–130 are compositionally biased toward low complexity; that stretch reads SCSSASSRSQQSSK. Ser-135 carries the post-translational modification Phosphoserine. The 317-residue stretch at 156–472 folds into the Protein kinase domain; the sequence is YEIVGNLGEG…LAEALLHPFF (317 aa). ATP-binding positions include 162-170 and Lys-186; that span reads LGEGTFGKV. Asp-283 acts as the Proton acceptor in catalysis.

Belongs to the protein kinase superfamily. CMGC Ser/Thr protein kinase family. Lammer subfamily. Autophosphorylates on all three types of residues. In terms of tissue distribution, endothelial cells.

The protein localises to the nucleus. It is found in the cytoplasm. The protein resides in the cytoplasmic vesicle. It localises to the secretory vesicle. Its subcellular location is the acrosome. The protein localises to the nucleus speckle. The enzyme catalyses L-seryl-[protein] + ATP = O-phospho-L-seryl-[protein] + ADP + H(+). It catalyses the reaction L-threonyl-[protein] + ATP = O-phospho-L-threonyl-[protein] + ADP + H(+). The catalysed reaction is L-tyrosyl-[protein] + ATP = O-phospho-L-tyrosyl-[protein] + ADP + H(+). Its activity is regulated as follows. Leucettine L41 inhibits its kinase activity and affects the regulation of alternative splicing mediated by phosphorylation of SR proteins. In terms of biological role, dual specificity kinase acting on both serine/threonine and tyrosine-containing substrates. Phosphorylates serine- and arginine-rich (SR) proteins of the spliceosomal complex. May be a constituent of a network of regulatory mechanisms that enable SR proteins to control RNA splicing and can cause redistribution of SR proteins from speckles to a diffuse nucleoplasmic distribution. Phosphorylates SRSF1 and SRSF3. Regulates the alternative splicing of tissue factor (F3) pre-mRNA in endothelial cells. This Homo sapiens (Human) protein is Dual specificity protein kinase CLK3.